We begin with the raw amino-acid sequence, 453 residues long: Secreted aspartic protease 10 (453 aa).

The N-terminal stretch at Met-1 to Cys-20 is a signal peptide. A Peptidase A1 domain is found at Tyr-52–Ala-372. The active site involves Asp-70. Asp-70–Gly-72 contributes to the pepstatin A binding site. Cys-85 and Cys-112 form a disulfide bridge. N-linked (GlcNAc...) asparagine glycosylation is found at Asn-115 and Asn-128. Val-138–Asp-139 is a binding site for pepstatin A. Residues Asn-168, Asn-208, Asn-211, and Asn-245 are each glycosylated (N-linked (GlcNAc...) asparagine). Residue Asp-266 is part of the active site. Pepstatin A is bound at residue Asp-266–Thr-270. N-linked (GlcNAc...) asparagine glycosylation is present at Asn-287. Cys-301 and Cys-333 are oxidised to a cystine. The disordered stretch occupies residues Asn-387–Asn-432. Residues Thr-397–Ser-417 show a composition bias toward low complexity. Over residues Lys-423–Asn-432 the composition is skewed to polar residues. Asn-424 carries an N-linked (GlcNAc...) asparagine glycan. Ser-429 carries GPI-anchor amidated serine lipidation. The propeptide at Ser-430–Ile-453 is removed in mature form.

Belongs to the peptidase A1 family. Post-translationally, the GPI-anchor is attached to the protein in the endoplasmic reticulum and serves to target the protein to the cell surface. There, the glucosamine-inositol phospholipid moiety is cleaved off and the GPI-modified mannoprotein is covalently attached via its lipidless GPI glycan remnant to the 1,6-beta-glucan of the outer cell wall layer.

Its subcellular location is the secreted. It is found in the cell membrane. The enzyme catalyses Preferential cleavage at the carboxyl of hydrophobic amino acids, but fails to cleave 15-Leu-|-Tyr-16, 16-Tyr-|-Leu-17 and 24-Phe-|-Phe-25 of insulin B chain. Activates trypsinogen, and degrades keratin.. Secreted aspartic peptidases (SAPs) are a group of ten acidic hydrolases considered as key virulence factors. These enzymes supply the fungus with nutrient amino acids as well as are able to degrade the selected host's proteins involved in the immune defense. Required for cell surface integrity and cell separation during budding. The protein is Secreted aspartic protease 10 of Candida albicans (strain SC5314 / ATCC MYA-2876) (Yeast).